The sequence spans 103 residues: METQNIRIRLKAFDHRVLDQATTDIADTARRTGALIRGPIPLPTRIEKFTVNRGPHIDKKSREQFEVRTHKRLLDIVQPTPQTVDALMKLDLAAGVNVEIKLA.

The protein belongs to the universal ribosomal protein uS10 family. Part of the 30S ribosomal subunit.

Involved in the binding of tRNA to the ribosomes. In Sphingopyxis alaskensis (strain DSM 13593 / LMG 18877 / RB2256) (Sphingomonas alaskensis), this protein is Small ribosomal subunit protein uS10.